A 214-amino-acid polypeptide reads, in one-letter code: uncharacterized protein (214 aa).

This is an uncharacterized protein from Methanocaldococcus jannaschii (strain ATCC 43067 / DSM 2661 / JAL-1 / JCM 10045 / NBRC 100440) (Methanococcus jannaschii).